The chain runs to 31 residues: leu operon leader peptide (31 aa).

Functionally, involved in control of the biosynthesis of leucine. This Buchnera aphidicola subsp. Rhopalosiphum padi protein is leu operon leader peptide (leuL).